A 783-amino-acid chain; its full sequence is ATP-dependent DNA helicase Hel308 (783 aa).

Residues Gln29 and 47-54 (VPTASGKT) each bind ATP. A Helicase ATP-binding domain is found at 34–209 (ERGVTEGANL…WLDAELVDSD (176 aa)). The DEAH box motif lies at 154–157 (DEVH). The region spanning 242-443 (QTAAVVADTL…EPALRTHVLA (202 aa)) is the Helicase C-terminal domain. A disordered region spans residues 744 to 783 (ETVGHPDPGMDGVAADTDAAPESGGEAGGDEGQASLGDFS).

It belongs to the helicase family. Hel308 subfamily. As to quaternary structure, monomer.

The catalysed reaction is Couples ATP hydrolysis with the unwinding of duplex DNA by translocating in the 3'-5' direction.. The enzyme catalyses ATP + H2O = ADP + phosphate + H(+). Functionally, DNA-dependent ATPase and 3'-5' DNA helicase that may be involved in repair of stalled replication forks. The chain is ATP-dependent DNA helicase Hel308 from Halobacterium salinarum (strain ATCC 700922 / JCM 11081 / NRC-1) (Halobacterium halobium).